Here is a 470-residue protein sequence, read N- to C-terminus: Tigger transposable element-derived protein 3 (470 aa).

One can recognise an HTH psq-type domain in the interval 3–55 (LNTKKKLHALSLAEKIQVLELLDESKMSQSEVARRFQVSQPQISRICKNKEKL). 2 consecutive DNA-binding regions (H-T-H motif) follow at residues 31-51 (QSEV…ICKN) and 100-130 (PMLL…WKRR). Residues 67 to 137 (ERKRKRESKY…KRRNNVGFGT (71 aa)) form the HTH CENPB-type domain. In terms of domain architecture, DDE-1 spans 167-360 (FSPEDVFGCA…VPRQLILSSF (194 aa)). The span at 402-421 (DPGPRVCKEETGTEDSGREE) shows a compositional bias: basic and acidic residues. The interval 402–426 (DPGPRVCKEETGTEDSGREEDGFEP) is disordered.

It belongs to the tigger transposable element derived protein family.

Its subcellular location is the nucleus. The protein is Tigger transposable element-derived protein 3 (Tigd3) of Mus musculus (Mouse).